A 179-amino-acid chain; its full sequence is Probable chorismate pyruvate-lyase (179 aa).

Residues arginine 82, leucine 120, and glutamate 165 each contribute to the substrate site.

The protein belongs to the UbiC family.

It localises to the cytoplasm. The enzyme catalyses chorismate = 4-hydroxybenzoate + pyruvate. Its pathway is cofactor biosynthesis; ubiquinone biosynthesis. Removes the pyruvyl group from chorismate, with concomitant aromatization of the ring, to provide 4-hydroxybenzoate (4HB) for the ubiquinone pathway. The chain is Probable chorismate pyruvate-lyase from Vibrio vulnificus (strain CMCP6).